The primary structure comprises 679 residues: Methionine--tRNA ligase (679 aa).

Positions 12–22 match the 'HIGH' region motif; sequence PYANGPIHIGH. 4 residues coordinate Zn(2+): cysteine 143, cysteine 146, cysteine 156, and cysteine 158. Residues 328 to 332 carry the 'KMSKS' region motif; the sequence is KMSKS. Residue lysine 331 participates in ATP binding. The tract at residues 537-564 is disordered; it reads MMEESKDEAAQETGAAATNPFNDSDQPL. In terms of domain architecture, tRNA-binding spans 577-679; the sequence is DFMKVDLRVA…EGALPGQRVH (103 aa).

This sequence belongs to the class-I aminoacyl-tRNA synthetase family. MetG type 1 subfamily. As to quaternary structure, homodimer. It depends on Zn(2+) as a cofactor.

It is found in the cytoplasm. The catalysed reaction is tRNA(Met) + L-methionine + ATP = L-methionyl-tRNA(Met) + AMP + diphosphate. Functionally, is required not only for elongation of protein synthesis but also for the initiation of all mRNA translation through initiator tRNA(fMet) aminoacylation. This Rhodopirellula baltica (strain DSM 10527 / NCIMB 13988 / SH1) protein is Methionine--tRNA ligase.